Here is a 279-residue protein sequence, read N- to C-terminus: Protein NipSnap homolog 1 (279 aa).

It belongs to the NipSnap family.

The protein resides in the mitochondrion matrix. In terms of biological role, protein involved in mitophagy. Accumulates on the mitochondria surface in response to mitochondrial depolarization and acts as a 'eat me' signal by recruiting proteins involved in selective autophagy. The polypeptide is Protein NipSnap homolog 1 (Danio rerio (Zebrafish)).